Here is a 255-residue protein sequence, read N- to C-terminus: Pyrroloquinoline-quinone synthase (255 aa).

This sequence belongs to the PqqC family.

It carries out the reaction 6-(2-amino-2-carboxyethyl)-7,8-dioxo-1,2,3,4,7,8-hexahydroquinoline-2,4-dicarboxylate + 3 O2 = pyrroloquinoline quinone + 2 H2O2 + 2 H2O + H(+). It participates in cofactor biosynthesis; pyrroloquinoline quinone biosynthesis. Functionally, ring cyclization and eight-electron oxidation of 3a-(2-amino-2-carboxyethyl)-4,5-dioxo-4,5,6,7,8,9-hexahydroquinoline-7,9-dicarboxylic-acid to PQQ. The protein is Pyrroloquinoline-quinone synthase of Cereibacter sphaeroides (strain ATCC 17029 / ATH 2.4.9) (Rhodobacter sphaeroides).